Consider the following 125-residue polypeptide: MHELSMAQGIINAVIDTAESNNATEVTEVGIEIGRLAMINPEQLRFMLSVLVENTIVEDADIKIEEIPVEINCPECGFKGVAELDDKDHYAPIVECPKCGNKRISILNGKDCVVKNIVIEKPDDD.

A Ni(2+)-binding site is contributed by histidine 2. Cysteine 73, cysteine 76, cysteine 96, and cysteine 99 together coordinate Zn(2+).

Belongs to the HypA/HybF family.

Its function is as follows. Involved in the maturation of [NiFe] hydrogenases. Required for nickel insertion into the metal center of the hydrogenase. The chain is Hydrogenase maturation factor HypA from Methanobrevibacter smithii (strain ATCC 35061 / DSM 861 / OCM 144 / PS).